Reading from the N-terminus, the 290-residue chain is uncharacterized protein (290 aa).

It belongs to the UreD family.

It localises to the cytoplasm. The protein resides in the nucleus. Functionally, probably facilitates nickel incorporation. This is an uncharacterized protein from Schizosaccharomyces pombe (strain 972 / ATCC 24843) (Fission yeast).